The chain runs to 430 residues: Tol-Pal system protein TolB (430 aa).

The signal sequence occupies residues 1-26 (MSLMTKLGLRTLVASCLIAVGGAANA).

It belongs to the TolB family. As to quaternary structure, the Tol-Pal system is composed of five core proteins: the inner membrane proteins TolA, TolQ and TolR, the periplasmic protein TolB and the outer membrane protein Pal. They form a network linking the inner and outer membranes and the peptidoglycan layer.

It localises to the periplasm. Part of the Tol-Pal system, which plays a role in outer membrane invagination during cell division and is important for maintaining outer membrane integrity. This chain is Tol-Pal system protein TolB, found in Paraburkholderia xenovorans (strain LB400).